A 468-amino-acid chain; its full sequence is 6-phosphogluconate dehydrogenase, decarboxylating (468 aa).

NADP(+) contacts are provided by residues 10–15 (GMAVMG), 33–35 (NRS), 74–76 (VKA), and Asn102. Substrate is bound by residues Asn102 and 128 to 130 (SGG). Lys183 acts as the Proton acceptor in catalysis. 186–187 (HN) provides a ligand contact to substrate. Residue Glu190 is the Proton donor of the active site. Substrate is bound by residues Tyr191, Lys260, Arg287, Arg445, and His451.

It belongs to the 6-phosphogluconate dehydrogenase family. Homodimer.

It carries out the reaction 6-phospho-D-gluconate + NADP(+) = D-ribulose 5-phosphate + CO2 + NADPH. It functions in the pathway carbohydrate degradation; pentose phosphate pathway; D-ribulose 5-phosphate from D-glucose 6-phosphate (oxidative stage): step 3/3. In terms of biological role, catalyzes the oxidative decarboxylation of 6-phosphogluconate to ribulose 5-phosphate and CO(2), with concomitant reduction of NADP to NADPH. The polypeptide is 6-phosphogluconate dehydrogenase, decarboxylating (gnd) (Klebsiella pneumoniae).